A 105-amino-acid polypeptide reads, in one-letter code: UPF0145 protein HD_1349 (105 aa).

Belongs to the UPF0145 family.

The sequence is that of UPF0145 protein HD_1349 from Haemophilus ducreyi (strain 35000HP / ATCC 700724).